The sequence spans 922 residues: Protein translocase subunit SecA (922 aa).

ATP-binding positions include Gln87, 105-109 (GEGKT), and Asp519. The interval 850-891 (HASRQMRSIQGNAQHNSMGSFSGSGHGMGPTALSARSRPENA) is disordered. A compositionally biased stretch (polar residues) spans 854 to 865 (QMRSIQGNAQHN). Zn(2+) contacts are provided by Cys906, Cys908, Cys917, and Cys918.

It belongs to the SecA family. Monomer and homodimer. Part of the essential Sec protein translocation apparatus which comprises SecA, SecYEG and auxiliary proteins SecDF. Other proteins may also be involved. The cofactor is Zn(2+).

It is found in the cell inner membrane. Its subcellular location is the cytoplasm. It carries out the reaction ATP + H2O + cellular proteinSide 1 = ADP + phosphate + cellular proteinSide 2.. Its function is as follows. Part of the Sec protein translocase complex. Interacts with the SecYEG preprotein conducting channel. Has a central role in coupling the hydrolysis of ATP to the transfer of proteins into and across the cell membrane, serving as an ATP-driven molecular motor driving the stepwise translocation of polypeptide chains across the membrane. This chain is Protein translocase subunit SecA, found in Treponema denticola (strain ATCC 35405 / DSM 14222 / CIP 103919 / JCM 8153 / KCTC 15104).